A 471-amino-acid chain; its full sequence is Probable flavin-containing monoamine oxidase B (471 aa).

C406 bears the S-8alpha-FAD cysteine mark.

It belongs to the flavin monoamine oxidase family. Requires FAD as cofactor.

It carries out the reaction a secondary aliphatic amine + O2 + H2O = a primary amine + an aldehyde + H2O2. This chain is Probable flavin-containing monoamine oxidase B (maoB-1), found in Dictyostelium discoideum (Social amoeba).